A 404-amino-acid polypeptide reads, in one-letter code: Probable tRNA sulfurtransferase (404 aa).

Residues 61 to 166 (QTLVTGLPKI…HDATYMMAQV (106 aa)) enclose the THUMP domain. Residues 184 to 185 (ML), 209 to 210 (HF), Arg-266, Gly-288, and Gln-297 each bind ATP.

This sequence belongs to the ThiI family.

The protein resides in the cytoplasm. It carries out the reaction [ThiI sulfur-carrier protein]-S-sulfanyl-L-cysteine + a uridine in tRNA + 2 reduced [2Fe-2S]-[ferredoxin] + ATP + H(+) = [ThiI sulfur-carrier protein]-L-cysteine + a 4-thiouridine in tRNA + 2 oxidized [2Fe-2S]-[ferredoxin] + AMP + diphosphate. The catalysed reaction is [ThiS sulfur-carrier protein]-C-terminal Gly-Gly-AMP + S-sulfanyl-L-cysteinyl-[cysteine desulfurase] + AH2 = [ThiS sulfur-carrier protein]-C-terminal-Gly-aminoethanethioate + L-cysteinyl-[cysteine desulfurase] + A + AMP + 2 H(+). Its pathway is cofactor biosynthesis; thiamine diphosphate biosynthesis. Functionally, catalyzes the ATP-dependent transfer of a sulfur to tRNA to produce 4-thiouridine in position 8 of tRNAs, which functions as a near-UV photosensor. Also catalyzes the transfer of sulfur to the sulfur carrier protein ThiS, forming ThiS-thiocarboxylate. This is a step in the synthesis of thiazole, in the thiamine biosynthesis pathway. The sulfur is donated as persulfide by IscS. The polypeptide is Probable tRNA sulfurtransferase (Lysinibacillus sphaericus (strain C3-41)).